Consider the following 349-residue polypeptide: Divinyl chlorophyll a/b light-harvesting protein PcbE (349 aa).

The next 6 helical transmembrane spans lie at 27 to 47 (FIAAHIAHTGLIAFAAGGSTL), 65 to 85 (IFLAHLASIGIGFDEAGAWTG), 88 to 108 (VASIAIVHLVLSMVYGAGGLL), 201 to 221 (VLGGHAFLAFLEITGGAFHIA), 241 to 261 (AILSFSCAGLGWMAVVAAFWC), and 308 to 328 (LANVHYYFGFFFLQGHLWHAL).

Belongs to the PsbB/PsbC family. IsiA/Pcb subfamily. In terms of assembly, the antenna complex consists of divinyl chlorophylls (a and b) and divinyl chlorophyll a/b binding proteins and binds more divinyl chlorophyll b than does the antenna complex from high-light-adapted Prochlorococcus. It depends on divinyl chlorophyll a as a cofactor. The cofactor is divinyl chlorophyll b.

The protein resides in the cellular thylakoid membrane. The antenna complex functions as a light receptor, it captures and delivers excitation energy to photosystems II and I. The Prochlorales pcb genes are not related to higher plant LHCs. This Prochlorococcus marinus (strain NATL2A) protein is Divinyl chlorophyll a/b light-harvesting protein PcbE (pcbE).